The chain runs to 317 residues: Putative HTH-type transcriptional regulatory protein TGAM_1316 (317 aa).

One can recognise an HTH cro/C1-type domain in the interval 131–189; sequence LKKLREKHGYSVGELASLLGVSRKSLLNYERNEQAVSLEVALRMEELFDEPIAEPIDVL. A DNA-binding region (H-T-H motif) is located at residues 142–161; it reads VGELASLLGVSRKSLLNYER.

The protein is Putative HTH-type transcriptional regulatory protein TGAM_1316 of Thermococcus gammatolerans (strain DSM 15229 / JCM 11827 / EJ3).